A 36-amino-acid polypeptide reads, in one-letter code: Alpha-amylase inhibitor AI-3688 (36 aa).

A disulfide bridge links cysteine 9 with cysteine 25.

Its function is as follows. Inhibits mammalian alpha-amylases specifically but has no action on plant and microbial alpha-amylases. The chain is Alpha-amylase inhibitor AI-3688 from Kitasatospora aureofaciens (Streptomyces aureofaciens).